Consider the following 335-residue polypeptide: Tryptophan--tRNA ligase (335 aa).

ATP-binding positions include 11-13 and 19-20; these read QPT and GN. A 'HIGH' region motif is present at residues 12 to 20; it reads PTGNLHLGN. Asp-135 provides a ligand contact to L-tryptophan. Residues 147–149, Val-189, and 198–202 contribute to the ATP site; these read GED and KMSKS. Residues 198–202 carry the 'KMSKS' region motif; sequence KMSKS.

The protein belongs to the class-I aminoacyl-tRNA synthetase family. As to quaternary structure, homodimer.

It localises to the cytoplasm. It catalyses the reaction tRNA(Trp) + L-tryptophan + ATP = L-tryptophyl-tRNA(Trp) + AMP + diphosphate + H(+). Catalyzes the attachment of tryptophan to tRNA(Trp). This is Tryptophan--tRNA ligase from Nostoc sp. (strain PCC 7120 / SAG 25.82 / UTEX 2576).